A 208-amino-acid chain; its full sequence is ATP synthase subunit b (208 aa).

The N-terminal stretch at 1–27 is a signal peptide; that stretch reads MVKAKKLVFKWSLLVFSFFTLSLFLVS. Cysteine 28 carries the N-palmitoyl cysteine lipid modification. Cysteine 28 carries S-diacylglycerol cysteine lipidation. The helical transmembrane segment at 49-69 threads the bilayer; the sequence is WVFITHLLAFFILLTLMIFLF.

Belongs to the ATPase B chain family. In terms of assembly, F-type ATPases have 2 components, F(1) - the catalytic core - and F(0) - the membrane proton channel. F(1) has five subunits: alpha(3), beta(3), gamma(1), delta(1), epsilon(1). F(0) has three main subunits: a(1), b(2) and c(10-14). The alpha and beta chains form an alternating ring which encloses part of the gamma chain. F(1) is attached to F(0) by a central stalk formed by the gamma and epsilon chains, while a peripheral stalk is formed by the delta and b chains.

It is found in the cell membrane. Functionally, f(1)F(0) ATP synthase produces ATP from ADP in the presence of a proton or sodium gradient. F-type ATPases consist of two structural domains, F(1) containing the extramembraneous catalytic core and F(0) containing the membrane proton channel, linked together by a central stalk and a peripheral stalk. During catalysis, ATP synthesis in the catalytic domain of F(1) is coupled via a rotary mechanism of the central stalk subunits to proton translocation. In terms of biological role, component of the F(0) channel, it forms part of the peripheral stalk, linking F(1) to F(0). This is ATP synthase subunit b from Mycoplasma genitalium (strain ATCC 33530 / DSM 19775 / NCTC 10195 / G37) (Mycoplasmoides genitalium).